The following is a 468-amino-acid chain: Probable Xaa-Pro aminopeptidase pepP (468 aa).

Residues Asp-265, Asp-276, Glu-399, and Glu-439 each coordinate Mn(2+).

It belongs to the peptidase M24B family. Mn(2+) is required as a cofactor.

It carries out the reaction Release of any N-terminal amino acid, including proline, that is linked to proline, even from a dipeptide or tripeptide.. In terms of biological role, catalyzes the removal of a penultimate prolyl residue from the N-termini of peptides. The polypeptide is Probable Xaa-Pro aminopeptidase pepP (pepP) (Aspergillus fumigatus (strain CBS 144.89 / FGSC A1163 / CEA10) (Neosartorya fumigata)).